Here is a 368-residue protein sequence, read N- to C-terminus: DNA replication and repair protein RecF (368 aa).

30 to 37 (GDNGAGKT) is a binding site for ATP.

Belongs to the RecF family.

The protein resides in the cytoplasm. The RecF protein is involved in DNA metabolism; it is required for DNA replication and normal SOS inducibility. RecF binds preferentially to single-stranded, linear DNA. It also seems to bind ATP. The polypeptide is DNA replication and repair protein RecF (Xanthomonas euvesicatoria pv. vesicatoria (strain 85-10) (Xanthomonas campestris pv. vesicatoria)).